The following is a 792-amino-acid chain: Phenylalanine--tRNA ligase beta subunit (792 aa).

A tRNA-binding domain is found at 39-147 (AAAFSGVVVG…DNAPIGQDIR (109 aa)). In terms of domain architecture, B5 spans 400–475 (PERPAVRLRP…RLHGYDAIPA (76 aa)). The Mg(2+) site is built by aspartate 453, aspartate 459, glutamate 462, and glutamate 463. Residues 698–791 (SRQPAVTRDV…TETSLGARLR (94 aa)) enclose the FDX-ACB domain.

Belongs to the phenylalanyl-tRNA synthetase beta subunit family. Type 1 subfamily. In terms of assembly, tetramer of two alpha and two beta subunits. The cofactor is Mg(2+).

It localises to the cytoplasm. It catalyses the reaction tRNA(Phe) + L-phenylalanine + ATP = L-phenylalanyl-tRNA(Phe) + AMP + diphosphate + H(+). The sequence is that of Phenylalanine--tRNA ligase beta subunit from Aromatoleum aromaticum (strain DSM 19018 / LMG 30748 / EbN1) (Azoarcus sp. (strain EbN1)).